Reading from the N-terminus, the 111-residue chain is Cell division topological specificity factor (111 aa).

This sequence belongs to the MinE family.

Functionally, prevents the cell division inhibition by proteins MinC and MinD at internal division sites while permitting inhibition at polar sites. This ensures cell division at the proper site by restricting the formation of a division septum at the midpoint of the long axis of the cell. In Prochlorococcus marinus (strain MIT 9312), this protein is Cell division topological specificity factor.